Reading from the N-terminus, the 241-residue chain is Cell division cycle-associated protein 4 (241 aa).

The SERTA domain maps to 30–77; the sequence is YSLQRQSLLDMSLVKLQLCHMLVEPNLCRSVLIANTVRQIQEEMTQDG.

Highest levels of expression in the pancreas, thymus, testis, spleen, liver, placenta and leukocytes. Relatively low levels in the lung, kidney, prostate, ovary, small intestine and colon. Hardly detectable, if at all, in the brain, skeletal muscle and heart.

It is found in the nucleus. May participate in the regulation of cell proliferation through the E2F/RB pathway. May be involved in molecular regulation of hematopoietic stem cells and progenitor cell lineage commitment and differentiation. This is Cell division cycle-associated protein 4 (CDCA4) from Homo sapiens (Human).